The chain runs to 539 residues: uncharacterized protein (539 aa).

A disordered region spans residues 34 to 63 (AASEVSPIPQERPTTSLRKPTPRVQRPATD). The next 11 membrane-spanning stretches (helical) occupy residues 103–123 (FATP…TTVF), 141–161 (MTAT…LDTV), 184–204 (ILLL…GILL), 244–264 (GIFH…IFLN), 277–299 (FLGA…IIYI), 325–345 (LAVP…LVTF), 360–380 (VLST…AAAA), 399–419 (THVS…ILFL), 434–454 (VVAL…ADNT), 470–490 (IGGV…AIIL), and 496–516 (WGLY…AGVE).

Belongs to the multi antimicrobial extrusion (MATE) (TC 2.A.66.1) family.

The protein localises to the vacuole membrane. This is an uncharacterized protein from Schizosaccharomyces pombe (strain 972 / ATCC 24843) (Fission yeast).